An 811-amino-acid chain; its full sequence is Protein kinase C-binding protein NELL2a (811 aa).

The first 18 residues, 1–18, serve as a signal peptide directing secretion; sequence MAFLQLFVGLLCGAAVSA. The Laminin G-like domain occupies 54–225; that stretch reads AFMFQGSSRS…TQCPDLNRTC (172 aa). Asparagine 222, asparagine 290, and asparagine 295 each carry an N-linked (GlcNAc...) asparagine glycan. In terms of domain architecture, VWFC 1 spans 269–328; it reads RTCRVKDQIYREEQSWTDGCKNCTCSNGTVRCEKILCPPLDCPDGTTPAYVTGTCCKECQ. Residues 395-437 form the EGF-like 1 domain; that stretch reads GHDFCAEENICSENSDCVNLDAGASCGCKNGFRPLRLDSAYCE. 3 disulfide bridges follow: cysteine 399-cysteine 411, cysteine 405-cysteine 420, and cysteine 422-cysteine 436. Ca(2+)-binding residues include aspartate 438, isoleucine 439, and glutamate 441. The EGF-like 2; calcium-binding domain occupies 438–479; it reads DIDECAEGRHYCRENTECVNTAGSFMCVCHTGFIRIDDYSCT. Intrachain disulfides connect cysteine 442–cysteine 455, cysteine 449–cysteine 464, cysteine 466–cysteine 478, cysteine 484–cysteine 497, cysteine 491–cysteine 506, cysteine 508–cysteine 519, cysteine 523–cysteine 533, cysteine 527–cysteine 539, and cysteine 541–cysteine 550. Positions 457, 458, and 461 each coordinate Ca(2+). The EGF-like 3; calcium-binding domain occupies 480–520; it reads EHDECASGQHDCDENALCFNTVGGHSCSCKPGYSGNGTVCR. Residue asparagine 515 is glycosylated (N-linked (GlcNAc...) asparagine). The EGF-like 4 domain maps to 521–551; that stretch reads ALCDGRCLNGGSCASPNVCVCVQGFSGQNCE. Ca(2+) contacts are provided by aspartate 553, isoleucine 554, and glutamate 556. Residues 553 to 592 form the EGF-like 5; calcium-binding domain; it reads DIDECSEGLVQCAAHATCVNLPGWYHCECRDGYHDNEVFS. Disulfide bonds link cysteine 557–cysteine 570, cysteine 564–cysteine 579, and cysteine 581–cysteine 598. Asparagine 572, leucine 573, and tryptophan 576 together coordinate Ca(2+). Ca(2+)-binding residues include aspartate 600, isoleucine 601, and glutamate 603. Positions 600–635 constitute an EGF-like 6; calcium-binding domain; it reads DIDECRTGRSTCANDTVCFNLDGGFDCRCPHGHNCS. Intrachain disulfides connect cysteine 604/cysteine 617, cysteine 611/cysteine 626, and cysteine 628/cysteine 634. The N-linked (GlcNAc...) asparagine glycan is linked to asparagine 613. Ca(2+) contacts are provided by asparagine 619, leucine 620, and glycine 623. An N-linked (GlcNAc...) asparagine glycan is attached at asparagine 633. 2 VWFC domains span residues 636–691 and 696–754; these read GDCI…PECD and SQCL…PRCV.

Homotrimer.

Its subcellular location is the secreted. Its function is as follows. May regulate neuronal differentiation, polarization and axon guidance. The chain is Protein kinase C-binding protein NELL2a (nell2a) from Danio rerio (Zebrafish).